The primary structure comprises 371 residues: S-adenosylmethionine:tRNA ribosyltransferase-isomerase (371 aa).

This sequence belongs to the QueA family. As to quaternary structure, monomer.

The protein resides in the cytoplasm. It carries out the reaction 7-aminomethyl-7-carbaguanosine(34) in tRNA + S-adenosyl-L-methionine = epoxyqueuosine(34) in tRNA + adenine + L-methionine + 2 H(+). The protein operates within tRNA modification; tRNA-queuosine biosynthesis. Its function is as follows. Transfers and isomerizes the ribose moiety from AdoMet to the 7-aminomethyl group of 7-deazaguanine (preQ1-tRNA) to give epoxyqueuosine (oQ-tRNA). The chain is S-adenosylmethionine:tRNA ribosyltransferase-isomerase from Prochlorococcus marinus (strain MIT 9303).